The following is a 274-amino-acid chain: NH(3)-dependent NAD(+) synthetase (274 aa).

Position 46 to 53 (46 to 53 (GISGGQDS)) interacts with ATP. Mg(2+) is bound at residue D52. R140 contacts deamido-NAD(+). T160 lines the ATP pocket. E165 contacts Mg(2+). Deamido-NAD(+) contacts are provided by K173 and D180. Residues K189 and T211 each contribute to the ATP site. 260 to 261 (HK) contacts deamido-NAD(+).

Belongs to the NAD synthetase family. In terms of assembly, homodimer.

The catalysed reaction is deamido-NAD(+) + NH4(+) + ATP = AMP + diphosphate + NAD(+) + H(+). The protein operates within cofactor biosynthesis; NAD(+) biosynthesis; NAD(+) from deamido-NAD(+) (ammonia route): step 1/1. Its function is as follows. Catalyzes the ATP-dependent amidation of deamido-NAD to form NAD. Uses ammonia as a nitrogen source. In Lactococcus lactis subsp. cremoris (strain SK11), this protein is NH(3)-dependent NAD(+) synthetase.